The sequence spans 122 residues: Selenoprotein H (122 aa).

At Lys20 the chain carries N6-acetyllysine. The cysteinyl-selenocysteine (Cys-Sec); redox-active cross-link spans Cys41–Sec44. A non-standard amino acid (selenocysteine) is located at residue Sec44.

This sequence belongs to the SelWTH family.

Functionally, may be involved in a redox-related process. This is Selenoprotein H from Homo sapiens (Human).